A 239-amino-acid polypeptide reads, in one-letter code: LexA repressor (239 aa).

The disordered stretch occupies residues 1–40; it reads MTEAATGPEGADPSRAARSLPGRPPGIRADSSGLTDRQRR. A DNA-binding region (H-T-H motif) is located at residues 58 to 78; it reads MREIGQAVGLSSTSSVAHQLM. Residues 89 to 100 are compositionally biased toward basic and acidic residues; that stretch reads DPHRPRAYEVRG. The segment at 89–116 is disordered; that stretch reads DPHRPRAYEVRGSDQPSAQPADTSGKPA. Catalysis depends on for autocatalytic cleavage activity residues Ser163 and Lys200.

This sequence belongs to the peptidase S24 family. Homodimer.

The enzyme catalyses Hydrolysis of Ala-|-Gly bond in repressor LexA.. In terms of biological role, represses a number of genes involved in the response to DNA damage (SOS response), including recA and lexA. In the presence of single-stranded DNA, RecA interacts with LexA causing an autocatalytic cleavage which disrupts the DNA-binding part of LexA, leading to derepression of the SOS regulon and eventually DNA repair. This is LexA repressor from Streptomyces clavuligerus.